The sequence spans 255 residues: NAD kinase (255 aa).

The active-site Proton acceptor is the aspartate 44. NAD(+) contacts are provided by residues 44–45 (DG), histidine 49, 114–115 (NE), aspartate 144, alanine 152, 155–160 (SAYNLS), and glutamine 216.

This sequence belongs to the NAD kinase family. A divalent metal cation serves as cofactor.

The protein localises to the cytoplasm. The enzyme catalyses NAD(+) + ATP = ADP + NADP(+) + H(+). Involved in the regulation of the intracellular balance of NAD and NADP, and is a key enzyme in the biosynthesis of NADP. Catalyzes specifically the phosphorylation on 2'-hydroxyl of the adenosine moiety of NAD to yield NADP. This is NAD kinase from Rickettsia felis (strain ATCC VR-1525 / URRWXCal2) (Rickettsia azadi).